Consider the following 360-residue polypeptide: MQEKPNLLSLKKFYFPKEWSYPVNTISKHIRDTFDEAVECGLFDGSNEKHFAYANGVLNCVTWFYPKYDYEQLMVAAAIMQWIFVLDDFLERDHMTDEKQQYCVRKYEDILIQGRSSPYLSTLDDCCLTPLDKYTLVLRKRLLKPSENRIETFNIFVHYLREWFFSIIPLKKSKGDHHTDSVPYEVYSFIRTINIGLYFVVGVNSVAVDTKVHGSFWINPIWQRMVRHAAKQIIIFNDCVSYAKEINHDCAGENCLYILQKKLNLSFEKVYEHVVEEAKQAIFEIQKDEVLLVETLSYLPEEQMNGVKYLIEQLREIVVGNRDWALMTPRYVHNDSPFIETRGTDPSIVPYEKILNSNLY.

Residues 87 to 92 (DDFLER) carry the DDxx(x)D/E motif motif. An NDxxSxxxD/E motif motif is present at residues 237–245 (NDCVSYAKE).

The protein belongs to the terpene synthase family.

Terpene synthase that converts its substrate farnesyl diphosphate (FPP) into 2 yet unidentified sesquiterpenes. This chain is Terpene synthase 5, found in Dictyostelium purpureum (Slime mold).